Consider the following 82-residue polypeptide: Small ribosomal subunit protein bS20 (82 aa).

Belongs to the bacterial ribosomal protein bS20 family.

Its function is as follows. Binds directly to 16S ribosomal RNA. This Streptococcus suis (strain 98HAH33) protein is Small ribosomal subunit protein bS20.